The following is a 489-amino-acid chain: FAD-containing monooxygenase EthA (489 aa).

FAD-binding positions include Ser15, Glu36, 44-47, Asp56, and Val104; that span reads TWDL. NADP(+) is bound at residue 54-56; that stretch reads RSD. NADP(+) contacts are provided by residues 183–189 and 207–208; these read SGATAVT and RS.

Belongs to the FAD-binding monooxygenase family. Requires FAD as cofactor.

The protein localises to the cell membrane. It catalyses the reaction ethionamide + NADPH + O2 + H(+) = ethionamide S-oxide + NADP(+) + H2O. In terms of biological role, monooxygenase able to convert a wide range of ketones to the corresponding esters or lactones via a Baeyer-Villiger oxidation reaction. Can act on long-chain aliphatic ketones (2-hexanone to 2-dodecanone) and on aromatic ketones (phenylacetone and benzylacetone). Is also able to catalyze enantioselective sulfoxidation of methyl-p-tolylsulfide. In vivo, likely functions as a BVMO, but the exact nature of the physiological substrate(s) remains to be established. Is responsible for the activation of several thiocarbamide-containing pro-drugs, such as ethionamide (ETH), isoxyl (ISO) and thiacetazone (TAC), into reactive species. The polypeptide is FAD-containing monooxygenase EthA (ethA) (Mycobacterium bovis (strain ATCC BAA-935 / AF2122/97)).